A 368-amino-acid chain; its full sequence is DNA replication and repair protein RecF (368 aa).

Residue 30–37 (GNNAQGKT) coordinates ATP.

The protein belongs to the RecF family.

Its subcellular location is the cytoplasm. Functionally, the RecF protein is involved in DNA metabolism; it is required for DNA replication and normal SOS inducibility. RecF binds preferentially to single-stranded, linear DNA. It also seems to bind ATP. The polypeptide is DNA replication and repair protein RecF (Streptococcus pyogenes serotype M49 (strain NZ131)).